The primary structure comprises 389 residues: Succinate--CoA ligase [ADP-forming] subunit beta (389 aa).

The region spanning K9–T244 is the ATP-grasp domain. ATP is bound by residues K46, G53–G55, G102, and E107. Mg(2+)-binding residues include N199 and D213. Substrate is bound by residues N264 and G321–V323.

The protein belongs to the succinate/malate CoA ligase beta subunit family. In terms of assembly, heterotetramer of two alpha and two beta subunits. Requires Mg(2+) as cofactor.

The enzyme catalyses succinate + ATP + CoA = succinyl-CoA + ADP + phosphate. It carries out the reaction GTP + succinate + CoA = succinyl-CoA + GDP + phosphate. It functions in the pathway carbohydrate metabolism; tricarboxylic acid cycle; succinate from succinyl-CoA (ligase route): step 1/1. Succinyl-CoA synthetase functions in the citric acid cycle (TCA), coupling the hydrolysis of succinyl-CoA to the synthesis of either ATP or GTP and thus represents the only step of substrate-level phosphorylation in the TCA. The beta subunit provides nucleotide specificity of the enzyme and binds the substrate succinate, while the binding sites for coenzyme A and phosphate are found in the alpha subunit. The chain is Succinate--CoA ligase [ADP-forming] subunit beta from Xanthomonas euvesicatoria pv. vesicatoria (strain 85-10) (Xanthomonas campestris pv. vesicatoria).